A 350-amino-acid polypeptide reads, in one-letter code: 3'-hydroxy-N-methyl-(S)-coclaurine 4'-O-methyltransferase (350 aa).

The S-adenosyl-L-methionine site is built by G196, D219, D239, M240, and K253. H257 functions as the Proton acceptor in the catalytic mechanism.

This sequence belongs to the class I-like SAM-binding methyltransferase superfamily. Cation-independent O-methyltransferase family. COMT subfamily. In terms of assembly, homodimer.

It carries out the reaction (S)-3'-hydroxy-N-methylcoclaurine + S-adenosyl-L-methionine = (S)-reticuline + S-adenosyl-L-homocysteine + H(+). It functions in the pathway alkaloid biosynthesis; (S)-reticuline biosynthesis; (S)-reticuline from (S)-norcoclaurine: step 4/4. Functionally, catalyzes the transfer of the methyl group to the 4'-hydroxyl group of 3'-hydroxy-N-methylcoclaurine to form reticuline. The polypeptide is 3'-hydroxy-N-methyl-(S)-coclaurine 4'-O-methyltransferase (Coptis japonica (Japanese goldthread)).